Reading from the N-terminus, the 545-residue chain is Cannabidiolic acid synthase-like 2 (545 aa).

An N-terminal signal peptide occupies residues 1–28; it reads MKCSTFCFWYVCKIIFFFLSFNIQISIA. C37 and C99 are oxidised to a cystine. Residues N45, N65, N89, and N168 are each glycosylated (N-linked (GlcNAc...) asparagine). Positions 77-251 constitute an FAD-binding PCMH-type domain; that stretch reads TTPKPLVITT…AAWKIRLVAV (175 aa). A cross-link (6-(S-cysteinyl)-8alpha-(pros-histidyl)-FAD (His-Cys)) is located at residues 114–176; that stretch reads HDAEGMSYIS…ENLSFPAGYC (63 aa). Position 292 (H292) interacts with substrate. N-linked (GlcNAc...) asparagine glycosylation is found at N297, N305, N329, and N361. Y417 is a binding site for substrate. N-linked (GlcNAc...) asparagine glycosylation is present at N467. The active-site Proton acceptor is Y484. An N-linked (GlcNAc...) asparagine glycan is attached at N499.

This sequence belongs to the oxygen-dependent FAD-linked oxidoreductase family. FAD serves as cofactor. In terms of processing, the FAD cofactor is bound via a bicovalent 6-S-cysteinyl, 8alpha-N1-histidyl FAD linkage.

It localises to the secreted. Has no cannabidiolic acid synthase activity. The protein is Cannabidiolic acid synthase-like 2 (CBDAS3) of Cannabis sativa (Hemp).